The sequence spans 214 residues: Phosphatidylcholine transfer protein (214 aa).

M1 is subject to N-acetylmethionine. The region spanning 1–212 is the START domain; the sequence is MELAAGSFSE…MARACQNYLK (212 aa). A 1,2-diacyl-sn-glycero-3-phosphocholine contacts are provided by Y72 and R78. S139 is modified (phosphoserine). Q157 is a binding site for a 1,2-diacyl-sn-glycero-3-phosphocholine.

As to quaternary structure, interacts with ACOT13/THEM2. As to expression, highest expression in liver, placenta, testis, kidney and heart. Low levels in brain and lung. No expression detected in thymus.

The protein resides in the cytoplasm. Catalyzes the transfer of phosphatidylcholine between membranes. Binds a single lipid molecule. The protein is Phosphatidylcholine transfer protein (PCTP) of Homo sapiens (Human).